Reading from the N-terminus, the 190-residue chain is UPF0725 protein At2g20625 (190 aa).

The protein belongs to the UPF0725 (EMB2204) family.

The polypeptide is UPF0725 protein At2g20625 (Arabidopsis thaliana (Mouse-ear cress)).